A 298-amino-acid chain; its full sequence is Nucleotide-binding protein RSKD131_3085 (298 aa).

11–18 (GPSGAGRT) serves as a coordination point for ATP. 58 to 61 (DVRN) provides a ligand contact to GTP.

This sequence belongs to the RapZ-like family.

Its function is as follows. Displays ATPase and GTPase activities. The chain is Nucleotide-binding protein RSKD131_3085 from Cereibacter sphaeroides (strain KD131 / KCTC 12085) (Rhodobacter sphaeroides).